A 221-amino-acid polypeptide reads, in one-letter code: Glutathione peroxidase (221 aa).

Positions 1-19 are cleaved as a signal peptide; sequence MFIQLLILSYAILLQLIAT. Residue asparagine 28 is glycosylated (N-linked (GlcNAc...) asparagine). The active site involves cysteine 72. N-linked (GlcNAc...) asparagine glycans are attached at residues asparagine 87 and asparagine 90.

Belongs to the glutathione peroxidase family. As to quaternary structure, homotetramer.

It is found in the secreted. Its subcellular location is the extracellular space. The catalysed reaction is 2 glutathione + H2O2 = glutathione disulfide + 2 H2O. This chain is Glutathione peroxidase, found in Dirofilaria immitis (Canine heartworm).